Reading from the N-terminus, the 484-residue chain is Glutamate--tRNA ligase (484 aa).

The 'HIGH' region signature appears at proline 11–asparagine 21. Residues lysine 252 to arginine 256 carry the 'KMSKS' region motif. ATP is bound at residue lysine 255.

This sequence belongs to the class-I aminoacyl-tRNA synthetase family. Glutamate--tRNA ligase type 1 subfamily. Monomer.

It localises to the cytoplasm. It catalyses the reaction tRNA(Glu) + L-glutamate + ATP = L-glutamyl-tRNA(Glu) + AMP + diphosphate. Its function is as follows. Catalyzes the attachment of glutamate to tRNA(Glu) in a two-step reaction: glutamate is first activated by ATP to form Glu-AMP and then transferred to the acceptor end of tRNA(Glu). This chain is Glutamate--tRNA ligase, found in Staphylococcus aureus (strain MRSA252).